The chain runs to 196 residues: NADH dehydrogenase [ubiquinone] 1 alpha subcomplex assembly factor 3 (196 aa).

Residues 1–93 constitute a mitochondrion transit peptide; the sequence is MIARTLRTVG…RSVLSWNVNS (93 aa).

This sequence belongs to the NDUFAF3 family. Together with NdufAF4 associates with mitochondrial complex I assembly intermediates during its biogenesis.

The protein localises to the mitochondrion. Involved in the assembly of mitochondrial NADH:ubiquinone oxidoreductase complex (complex I). Together with NdufAF4, involved in biogenesis of complex 1 modules N, Q and P-peripheral, but not the P-distal module. Required for recruitment of the complex I assembly factor Timmdc1 to complex 1 assembly intermediates. The polypeptide is NADH dehydrogenase [ubiquinone] 1 alpha subcomplex assembly factor 3 (Drosophila melanogaster (Fruit fly)).